Here is a 477-residue protein sequence, read N- to C-terminus: UDP-N-acetylmuramate--L-alanine ligase (477 aa).

An ATP-binding site is contributed by 112–118 (GTHGKTT).

This sequence belongs to the MurCDEF family.

The protein resides in the cytoplasm. The enzyme catalyses UDP-N-acetyl-alpha-D-muramate + L-alanine + ATP = UDP-N-acetyl-alpha-D-muramoyl-L-alanine + ADP + phosphate + H(+). It participates in cell wall biogenesis; peptidoglycan biosynthesis. Functionally, cell wall formation. This is UDP-N-acetylmuramate--L-alanine ligase from Verminephrobacter eiseniae (strain EF01-2).